The following is a 226-amino-acid chain: 7-cyano-7-deazaguanine synthase (226 aa).

Residue 10 to 20 coordinates ATP; sequence LSGGLDSATAA. The Zn(2+) site is built by Cys-191, Cys-199, Cys-202, and Cys-205.

This sequence belongs to the QueC family. It depends on Zn(2+) as a cofactor.

It catalyses the reaction 7-carboxy-7-deazaguanine + NH4(+) + ATP = 7-cyano-7-deazaguanine + ADP + phosphate + H2O + H(+). It participates in purine metabolism; 7-cyano-7-deazaguanine biosynthesis. Catalyzes the ATP-dependent conversion of 7-carboxy-7-deazaguanine (CDG) to 7-cyano-7-deazaguanine (preQ(0)). The protein is 7-cyano-7-deazaguanine synthase of Parasynechococcus marenigrum (strain WH8102).